The sequence spans 386 residues: MAP kinase-activated protein kinase 2 (386 aa).

The interval 1 to 29 (MLSGSPGQTPPAPFPSPPPPAPAQPPPPF) is disordered. A compositionally biased stretch (pro residues) spans 8–29 (QTPPAPFPSPPPPAPAQPPPPF). The 262-residue stretch at 50-311 (KVTSQVLGLG…ITEFMNHPWI (262 aa)) folds into the Protein kinase domain. ATP is bound by residues 56–64 (LGLGINGKV) and Lys-79. Residue 125–127 (ECL) coordinates staurosporine. The Proton acceptor role is filled by Asp-172. A Phosphothreonine; by MAPK14 modification is found at Thr-208. Ser-258 carries the post-translational modification Phosphoserine; by MAPK14. Position 314 is a phosphoserine; by autocatalysis (Ser-314). The interval 314 to 350 (STKVPQTPLHTSRVLKEDKERWEDVKEEMTSALATMR) is autoinhibitory helix. Thr-320 carries the phosphothreonine; by MAPK14 modification. 2 consecutive short sequence motifs (nuclear export signal (NES)) follow at residues 331–354 (DKER…VDYE) and 342–351 (MTSALATMRV). Lys-339 participates in a covalent cross-link: Glycyl lysine isopeptide (Lys-Gly) (interchain with G-Cter in SUMO). The interval 352 to 376 (DYEQIKIKKIEDASNPLLLKRRKKA) is p38 MAPK-binding site. 2 short sequence motifs (bipartite nuclear localization signal) span residues 357–360 (KIKK) and 371–375 (KRRKK).

This sequence belongs to the protein kinase superfamily. CAMK Ser/Thr protein kinase family. As to quaternary structure, heterodimer with p38-alpha/MAPK14; this heterodimer forms a stable complex: molecules are positioned 'face to face' so that the ATP-binding sites of both kinases are at the heterodimer interface. Interacts with PHC2. Interacts with HSF1. Sumoylation inhibits the protein kinase activity. In terms of processing, phosphorylated and activated by MAP kinase p38-alpha/MAPK14 at Thr-208; Ser-258 and Thr-320. In terms of tissue distribution, ubiquitously expressed (at protein level).

It localises to the cytoplasm. It is found in the nucleus. It carries out the reaction L-seryl-[protein] + ATP = O-phospho-L-seryl-[protein] + ADP + H(+). The catalysed reaction is L-threonyl-[protein] + ATP = O-phospho-L-threonyl-[protein] + ADP + H(+). Its activity is regulated as follows. Activated following phosphorylation by p38-alpha/MAPK14 following various stresses. Inhibited following sumoylation. Specifically inhibited by pyrrolopyridine inhibitors. Its function is as follows. Stress-activated serine/threonine-protein kinase involved in cytokine production, endocytosis, reorganization of the cytoskeleton, cell migration, cell cycle control, chromatin remodeling, DNA damage response and transcriptional regulation. Following stress, it is phosphorylated and activated by MAP kinase p38-alpha/MAPK14, leading to phosphorylation of substrates. Phosphorylates serine in the peptide sequence, Hyd-X-R-X(2)-S, where Hyd is a large hydrophobic residue. Phosphorylates ALOX5, CDC25B, CDC25C, CEP131, ELAVL1, HNRNPA0, HSP27/HSPB1, KRT18, KRT20, LIMK1, LSP1, PABPC1, PARN, PDE4A, RCSD1, RPS6KA3, TAB3 and TTP/ZFP36. Phosphorylates HSF1; leading to the interaction with HSP90 proteins and inhibiting HSF1 homotrimerization, DNA-binding and transactivation activities. Mediates phosphorylation of HSP27/HSPB1 in response to stress, leading to dissociation of HSP27/HSPB1 from large small heat-shock protein (sHsps) oligomers and impairment of their chaperone activities and ability to protect against oxidative stress effectively. Involved in inflammatory response by regulating tumor necrosis factor (TNF) and IL6 production post-transcriptionally: acts by phosphorylating AU-rich elements (AREs)-binding proteins ELAVL1, HNRNPA0, PABPC1 and TTP/ZFP36, leading to regulation of the stability and translation of TNF and IL6 mRNAs. Phosphorylation of TTP/ZFP36, a major post-transcriptional regulator of TNF, promotes its binding to 14-3-3 proteins and reduces its ARE mRNA affinity leading to inhibition of dependent degradation of ARE-containing transcripts. Phosphorylates CEP131 in response to cellular stress following ultraviolet irradiation which promotes binding of CEP131 to 14-3-3 proteins and inhibits formation of novel centriolar satellites. Also involved in late G2/M checkpoint following DNA damage through a process of post-transcriptional mRNA stabilization: following DNA damage, relocalizes from nucleus to cytoplasm and phosphorylates HNRNPA0 and PARN, leading to stabilization of GADD45A mRNA. Involved in toll-like receptor signaling pathway (TLR) in dendritic cells: required for acute TLR-induced macropinocytosis by phosphorylating and activating RPS6KA3. In Mus musculus (Mouse), this protein is MAP kinase-activated protein kinase 2 (Mapkapk2).